Reading from the N-terminus, the 527-residue chain is ATP synthase subunit alpha (527 aa).

Residue 169-176 (GDRQTGKT) coordinates ATP.

The protein belongs to the ATPase alpha/beta chains family. F-type ATPases have 2 components, CF(1) - the catalytic core - and CF(0) - the membrane proton channel. CF(1) has five subunits: alpha(3), beta(3), gamma(1), delta(1), epsilon(1). CF(0) has three main subunits: a(1), b(2) and c(9-12). The alpha and beta chains form an alternating ring which encloses part of the gamma chain. CF(1) is attached to CF(0) by a central stalk formed by the gamma and epsilon chains, while a peripheral stalk is formed by the delta and b chains.

It localises to the cell membrane. The enzyme catalyses ATP + H2O + 4 H(+)(in) = ADP + phosphate + 5 H(+)(out). In terms of biological role, produces ATP from ADP in the presence of a proton gradient across the membrane. The alpha chain is a regulatory subunit. The chain is ATP synthase subunit alpha from Metamycoplasma arthritidis (strain 158L3-1) (Mycoplasma arthritidis).